A 183-amino-acid chain; its full sequence is uncharacterized protein (183 aa).

Belongs to the asfivirus S183L family.

This is an uncharacterized protein from Ornithodoros (relapsing fever ticks).